An 88-amino-acid chain; its full sequence is Small ribosomal subunit protein uS19 (88 aa).

The protein belongs to the universal ribosomal protein uS19 family.

In terms of biological role, protein S19 forms a complex with S13 that binds strongly to the 16S ribosomal RNA. The sequence is that of Small ribosomal subunit protein uS19 from Ureaplasma parvum serovar 3 (strain ATCC 27815 / 27 / NCTC 11736).